We begin with the raw amino-acid sequence, 508 residues long: tRNA-2-methylthio-N(6)-dimethylallyladenosine synthase (508 aa).

A disordered region spans residues 1-21; sequence MNEEQRKASGQVSSSDKKSEK. In terms of domain architecture, MTTase N-terminal spans 65–183; that stretch reads RKFYIRTYGC…LPELLSECYL (119 aa). Residues Cys74, Cys110, Cys144, Cys220, Cys224, and Cys227 each coordinate [4Fe-4S] cluster. The region spanning 206-436 is the Radical SAM core domain; the sequence is RQGKIKGWVN…NALVNEISAK (231 aa). The TRAM domain maps to 439–502; the sequence is KEYEGQTVEV…TWSLDGEMVG (64 aa).

Belongs to the methylthiotransferase family. MiaB subfamily. Monomer. [4Fe-4S] cluster serves as cofactor.

The protein resides in the cytoplasm. It catalyses the reaction N(6)-dimethylallyladenosine(37) in tRNA + (sulfur carrier)-SH + AH2 + 2 S-adenosyl-L-methionine = 2-methylsulfanyl-N(6)-dimethylallyladenosine(37) in tRNA + (sulfur carrier)-H + 5'-deoxyadenosine + L-methionine + A + S-adenosyl-L-homocysteine + 2 H(+). In terms of biological role, catalyzes the methylthiolation of N6-(dimethylallyl)adenosine (i(6)A), leading to the formation of 2-methylthio-N6-(dimethylallyl)adenosine (ms(2)i(6)A) at position 37 in tRNAs that read codons beginning with uridine. The chain is tRNA-2-methylthio-N(6)-dimethylallyladenosine synthase from Bacillus pumilus (strain SAFR-032).